The following is a 195-amino-acid chain: dCTP deaminase (195 aa).

Residues 110–115, Asp128, 136–138, Tyr171, Lys178, and Gln182 contribute to the dCTP site; these read RSSLAR and VLE. Glu138 acts as the Proton donor/acceptor in catalysis. The interval 171 to 195 is disordered; sequence YSSRKDAKYKNQQSAVASRIDEDKE.

Belongs to the dCTP deaminase family. In terms of assembly, homotrimer.

The enzyme catalyses dCTP + H2O + H(+) = dUTP + NH4(+). It participates in pyrimidine metabolism; dUMP biosynthesis; dUMP from dCTP (dUTP route): step 1/2. Catalyzes the deamination of dCTP to dUTP. This is dCTP deaminase from Haemophilus influenzae (strain ATCC 51907 / DSM 11121 / KW20 / Rd).